An 842-amino-acid polypeptide reads, in one-letter code: Translation initiation factor IF-2 (842 aa).

2 disordered regions span residues 42–91 and 139–253; these read ETKR…NLSS and LQKQ…NQEP. Basic and acidic residues-rich tracts occupy residues 176–190 and 199–214; these read IEKRKIDENQEEERH and SEIRAPKIVKGADERR. The tr-type G domain occupies 340-509; sequence PRPPVVTIMG…LLQAEMLDLK (170 aa). A G1 region spans residues 349-356; that stretch reads GHVDHGKT. Position 349–356 (349–356) interacts with GTP; that stretch reads GHVDHGKT. Residues 374–378 are G2; that stretch reads GITQH. The tract at residues 395 to 398 is G3; it reads DTPG. GTP is bound by residues 395–399 and 449–452; these read DTPGH and NKID. A G4 region spans residues 449–452; the sequence is NKID. The G5 stretch occupies residues 485-487; the sequence is SAK.

Belongs to the TRAFAC class translation factor GTPase superfamily. Classic translation factor GTPase family. IF-2 subfamily.

It is found in the cytoplasm. In terms of biological role, one of the essential components for the initiation of protein synthesis. Protects formylmethionyl-tRNA from spontaneous hydrolysis and promotes its binding to the 30S ribosomal subunits. Also involved in the hydrolysis of GTP during the formation of the 70S ribosomal complex. This Bartonella tribocorum (strain CIP 105476 / IBS 506) protein is Translation initiation factor IF-2.